A 502-amino-acid polypeptide reads, in one-letter code: Lysine--tRNA ligase (502 aa).

Mg(2+)-binding residues include Glu403 and Glu410.

The protein belongs to the class-II aminoacyl-tRNA synthetase family. Homodimer. Requires Mg(2+) as cofactor.

It localises to the cytoplasm. It catalyses the reaction tRNA(Lys) + L-lysine + ATP = L-lysyl-tRNA(Lys) + AMP + diphosphate. The protein is Lysine--tRNA ligase of Parasynechococcus marenigrum (strain WH8102).